The chain runs to 20 residues: Brevinin-1LT (20 aa).

The cysteines at positions 14 and 20 are disulfide-linked.

Expressed by the skin glands.

The protein resides in the secreted. In terms of biological role, antimicrobial peptide. This is Brevinin-1LT from Rana latastei (Italian agile frog).